We begin with the raw amino-acid sequence, 333 residues long: DNA-directed RNA polymerase subunit alpha (333 aa).

The tract at residues Met1–Asn227 is alpha N-terminal domain (alpha-NTD). Residues Glu247–Ala333 form an alpha C-terminal domain (alpha-CTD) region.

It belongs to the RNA polymerase alpha chain family. In terms of assembly, homodimer. The RNAP catalytic core consists of 2 alpha, 1 beta, 1 beta' and 1 omega subunit. When a sigma factor is associated with the core the holoenzyme is formed, which can initiate transcription.

It carries out the reaction RNA(n) + a ribonucleoside 5'-triphosphate = RNA(n+1) + diphosphate. Functionally, DNA-dependent RNA polymerase catalyzes the transcription of DNA into RNA using the four ribonucleoside triphosphates as substrates. The polypeptide is DNA-directed RNA polymerase subunit alpha (Sulfurovum sp. (strain NBC37-1)).